Consider the following 150-residue polypeptide: Arginine repressor (150 aa).

Belongs to the ArgR family.

The protein localises to the cytoplasm. It functions in the pathway amino-acid biosynthesis; L-arginine biosynthesis [regulation]. In terms of biological role, regulates arginine biosynthesis genes. This is Arginine repressor from Symbiobacterium thermophilum (strain DSM 24528 / JCM 14929 / IAM 14863 / T).